The following is a 179-amino-acid chain: Bifunctional protein PyrR (179 aa).

Substrate-binding positions include 39-40, 101-109, Arg-134, and Val-158; these read RR and DDVLFTGRT. A PRPP-binding motif is present at residues 97-109; the sequence is VILIDDVLFTGRT.

This sequence belongs to the purine/pyrimidine phosphoribosyltransferase family. PyrR subfamily.

The enzyme catalyses UMP + diphosphate = 5-phospho-alpha-D-ribose 1-diphosphate + uracil. Its function is as follows. Regulates the transcription of the pyrimidine nucleotide (pyr) operon in response to exogenous pyrimidines. Also displays a weak uracil phosphoribosyltransferase activity which is not physiologically significant. In Haemophilus ducreyi (strain 35000HP / ATCC 700724), this protein is Bifunctional protein PyrR.